Here is a 457-residue protein sequence, read N- to C-terminus: Chromosomal replication initiator protein DnaA (457 aa).

The segment at 1 to 75 is domain I, interacts with DnaA modulators; it reads MDAQLNNLWE…ALKIVTSRKF (75 aa). Residues 75 to 118 are domain II; the sequence is FKIEFYLESDLEEEKENEEKQKEEKKDNTNDVDGSIVVSDEMSA. The tract at residues 87 to 108 is disordered; that stretch reads EEKENEEKQKEEKKDNTNDVDG. Residues 91–103 show a composition bias toward basic and acidic residues; it reads NEEKQKEEKKDNT. The domain III, AAA+ region stretch occupies residues 119-335; it reads TLNPKYTFQS…GALIRIIAYS (217 aa). 4 residues coordinate ATP: G163, G165, K166, and T167. The interval 336–457 is domain IV, binds dsDNA; that stretch reads SLTNRDVSVD…NDITKKLTQK (122 aa).

The protein belongs to the DnaA family. Oligomerizes as a right-handed, spiral filament on DNA at oriC.

The protein resides in the cytoplasm. Functionally, plays an essential role in the initiation and regulation of chromosomal replication. ATP-DnaA binds to the origin of replication (oriC) to initiate formation of the DNA replication initiation complex once per cell cycle. Binds the DnaA box (a 9 base pair repeat at the origin) and separates the double-stranded (ds)DNA. Forms a right-handed helical filament on oriC DNA; dsDNA binds to the exterior of the filament while single-stranded (ss)DNA is stabiized in the filament's interior. The ATP-DnaA-oriC complex binds and stabilizes one strand of the AT-rich DNA unwinding element (DUE), permitting loading of DNA polymerase. After initiation quickly degrades to an ADP-DnaA complex that is not apt for DNA replication. Binds acidic phospholipids. In Clostridium perfringens (strain SM101 / Type A), this protein is Chromosomal replication initiator protein DnaA.